The chain runs to 29 residues: Cytochrome b6-f complex subunit 8 (29 aa).

Residues 3–23 (IVSLAWASLMVVFTFSLSLVV) traverse the membrane as a helical segment.

The protein belongs to the PetN family. The 4 large subunits of the cytochrome b6-f complex are cytochrome b6, subunit IV (17 kDa polypeptide, PetD), cytochrome f and the Rieske protein, while the 4 small subunits are PetG, PetL, PetM and PetN. The complex functions as a dimer.

It is found in the plastid. Its subcellular location is the chloroplast thylakoid membrane. Its function is as follows. Component of the cytochrome b6-f complex, which mediates electron transfer between photosystem II (PSII) and photosystem I (PSI), cyclic electron flow around PSI, and state transitions. The polypeptide is Cytochrome b6-f complex subunit 8 (Coffea arabica (Arabian coffee)).